Here is a 148-residue protein sequence, read N- to C-terminus: SsrA-binding protein (148 aa).

This sequence belongs to the SmpB family.

The protein localises to the cytoplasm. In terms of biological role, required for rescue of stalled ribosomes mediated by trans-translation. Binds to transfer-messenger RNA (tmRNA), required for stable association of tmRNA with ribosomes. tmRNA and SmpB together mimic tRNA shape, replacing the anticodon stem-loop with SmpB. tmRNA is encoded by the ssrA gene; the 2 termini fold to resemble tRNA(Ala) and it encodes a 'tag peptide', a short internal open reading frame. During trans-translation Ala-aminoacylated tmRNA acts like a tRNA, entering the A-site of stalled ribosomes, displacing the stalled mRNA. The ribosome then switches to translate the ORF on the tmRNA; the nascent peptide is terminated with the 'tag peptide' encoded by the tmRNA and targeted for degradation. The ribosome is freed to recommence translation, which seems to be the essential function of trans-translation. In Ehrlichia canis (strain Jake), this protein is SsrA-binding protein.